Here is a 93-residue protein sequence, read N- to C-terminus: HssA/B-like protein 26 (93 aa).

It belongs to the hssA/B family.

This chain is HssA/B-like protein 26 (hssl26), found in Dictyostelium discoideum (Social amoeba).